A 390-amino-acid polypeptide reads, in one-letter code: MIIVVGIGADGMTGLSEHSRSELRRATVIYGSKRQLALLDDTVTAERWEWPTPMLPAVQGLSPDGADLHVVASGDPLLHGIGSTLIRLFGHDNVTVLPHVSAVTLACARMGWNVYDTEVISLVTAQPHTAVRRGGRAIVLSGDRSTPQALAVLLTEHGRGDSKFSVLEQLGGPAERRRDGTARAWACDPPLDVDELNVIAVRYLPDERTSWAPDEAFAHDGQITKHPIRVLTLAALAPRPGQRLWDVGAGSGAIAVQWCRSWPGCTAVAFERDERRRRNIGFNAAAFGVSVDVRGDAPDAFDDAARPSVIFLGGGVTQPGLLEACLHSLPAGGNLVANAVTVESEAALAHAYSRLGGELRRFQHYLGEPLGGFTGWRPQLPVTQWSVTKR.

The protein belongs to the precorrin methyltransferase family.

The catalysed reaction is precorrin-6B + 2 S-adenosyl-L-methionine = precorrin-8X + 2 S-adenosyl-L-homocysteine + CO2 + 3 H(+). It functions in the pathway cofactor biosynthesis; adenosylcobalamin biosynthesis; cob(II)yrinate a,c-diamide from precorrin-2 (aerobic route): step 7/10. Catalyzes the methylation of both C-5 and C-15 in precorrin-6Y to form precorrin-8X. This chain is Precorrin-6Y C(5,15)-methyltransferase [decarboxylating] (cobL), found in Mycobacterium tuberculosis (strain CDC 1551 / Oshkosh).